The primary structure comprises 119 residues: Large ribosomal subunit protein uL18 (119 aa).

This sequence belongs to the universal ribosomal protein uL18 family. Part of the 50S ribosomal subunit; part of the 5S rRNA/L5/L18/L25 subcomplex. Contacts the 5S and 23S rRNAs.

Functionally, this is one of the proteins that bind and probably mediate the attachment of the 5S RNA into the large ribosomal subunit, where it forms part of the central protuberance. The chain is Large ribosomal subunit protein uL18 from Mesorhizobium japonicum (strain LMG 29417 / CECT 9101 / MAFF 303099) (Mesorhizobium loti (strain MAFF 303099)).